We begin with the raw amino-acid sequence, 942 residues long: DNA polymerase I (942 aa).

One can recognise a 5'-3' exonuclease domain in the interval 177–269 (EPDQLADLRG…LEAARIGVYD (93 aa)). A 3'-5' exonuclease domain is found at 340-522 (TIVRDATALA…LTERLQRQLE (183 aa)).

This sequence belongs to the DNA polymerase type-A family. In terms of assembly, single-chain monomer with multiple functions.

It carries out the reaction DNA(n) + a 2'-deoxyribonucleoside 5'-triphosphate = DNA(n+1) + diphosphate. Its function is as follows. In addition to polymerase activity, this DNA polymerase exhibits 3'-5' and 5'-3' exonuclease activity. The chain is DNA polymerase I (polA) from Chloroflexus aurantiacus (strain ATCC 29366 / DSM 635 / J-10-fl).